The primary structure comprises 399 residues: uncharacterized protein (399 aa).

Belongs to the AdoMet synthetase 2 family.

This is an uncharacterized protein from Streptococcus pyogenes serotype M1.